The primary structure comprises 353 residues: Nicotinate-nucleotide--dimethylbenzimidazole phosphoribosyltransferase (353 aa).

The active-site Proton acceptor is E319.

It belongs to the CobT family.

It carries out the reaction 5,6-dimethylbenzimidazole + nicotinate beta-D-ribonucleotide = alpha-ribazole 5'-phosphate + nicotinate + H(+). It participates in nucleoside biosynthesis; alpha-ribazole biosynthesis; alpha-ribazole from 5,6-dimethylbenzimidazole: step 1/2. Catalyzes the synthesis of alpha-ribazole-5'-phosphate from nicotinate mononucleotide (NAMN) and 5,6-dimethylbenzimidazole (DMB). The polypeptide is Nicotinate-nucleotide--dimethylbenzimidazole phosphoribosyltransferase (Chlorobaculum parvum (strain DSM 263 / NCIMB 8327) (Chlorobium vibrioforme subsp. thiosulfatophilum)).